A 264-amino-acid polypeptide reads, in one-letter code: 3-methyl-2-oxobutanoate hydroxymethyltransferase (264 aa).

Residues Asp45 and Asp84 each coordinate Mg(2+). Residues 45–46, Asp84, and Lys112 contribute to the 3-methyl-2-oxobutanoate site; that span reads DS. Position 114 (Glu114) interacts with Mg(2+). Glu181 serves as the catalytic Proton acceptor.

Belongs to the PanB family. As to quaternary structure, homodecamer; pentamer of dimers. Mg(2+) is required as a cofactor.

The protein resides in the cytoplasm. It catalyses the reaction 3-methyl-2-oxobutanoate + (6R)-5,10-methylene-5,6,7,8-tetrahydrofolate + H2O = 2-dehydropantoate + (6S)-5,6,7,8-tetrahydrofolate. Its pathway is cofactor biosynthesis; (R)-pantothenate biosynthesis; (R)-pantoate from 3-methyl-2-oxobutanoate: step 1/2. In terms of biological role, catalyzes the reversible reaction in which hydroxymethyl group from 5,10-methylenetetrahydrofolate is transferred onto alpha-ketoisovalerate to form ketopantoate. The polypeptide is 3-methyl-2-oxobutanoate hydroxymethyltransferase (Edwardsiella ictaluri (strain 93-146)).